A 289-amino-acid chain; its full sequence is Glucose and ribitol dehydrogenase homolog 2 (289 aa).

A disordered region spans residues 1 to 32 (MASGFPPQKQETQPGIQHVMEPTPEFSSSNYK). 43-67 (LVTGGDSGIGKAVCHCYALEGASVA) serves as a coordination point for NAD(+). S180 contacts substrate. Y193 acts as the Proton acceptor in catalysis.

Belongs to the short-chain dehydrogenases/reductases (SDR) family.

Its function is as follows. May act as a short alcohol-polyol-sugar dehydrogenase possibly related to carbohydrate metabolism and the acquisition of desiccation tolerance. May also be involved in signal transduction. The polypeptide is Glucose and ribitol dehydrogenase homolog 2 (Arabidopsis thaliana (Mouse-ear cress)).